The chain runs to 173 residues: Photosystem I assembly protein Ycf3 (173 aa).

3 TPR repeats span residues A36–D69, S73–L106, and G121–N154.

It belongs to the Ycf3 family.

The protein localises to the cellular thylakoid membrane. Functionally, essential for the assembly of the photosystem I (PSI) complex. May act as a chaperone-like factor to guide the assembly of the PSI subunits. The polypeptide is Photosystem I assembly protein Ycf3 (Synechococcus sp. (strain JA-3-3Ab) (Cyanobacteria bacterium Yellowstone A-Prime)).